Reading from the N-terminus, the 185-residue chain is Large ribosomal subunit protein uL22 (185 aa).

Belongs to the universal ribosomal protein uL22 family. Part of the 50S ribosomal subunit.

Functionally, this protein binds specifically to 23S rRNA. It makes multiple contacts with different domains of the 23S rRNA in the assembled 50S subunit and ribosome. Its function is as follows. The globular domain of the protein is located near the polypeptide exit tunnel on the outside of the subunit, while an extended beta-hairpin is found that lines the wall of the exit tunnel in the center of the 70S ribosome. This chain is Large ribosomal subunit protein uL22, found in Pyrobaculum aerophilum (strain ATCC 51768 / DSM 7523 / JCM 9630 / CIP 104966 / NBRC 100827 / IM2).